The chain runs to 76 residues: UPF0729 protein C18orf32 (76 aa).

The interval 1–37 (MVCIPCIVIPVLLWIYKKFLEPYIYPLVSPFVSRIWP) is necessary for its localzation to the endoplasmic reticulum and lipid droplets. The interval 46–76 (DTNKGKVNFKGADMNGLPTKGPTEICDKKKD) is disordered.

Belongs to the UPF0729 family. As to quaternary structure, interacts with DERL1 and AMFR. In terms of processing, undergoes ER-associated degradation (ERAD).

The protein resides in the endoplasmic reticulum. It is found in the lipid droplet. Functionally, may activate the NF-kappa-B signaling pathway. The sequence is that of UPF0729 protein C18orf32 (C18orf32) from Homo sapiens (Human).